We begin with the raw amino-acid sequence, 2139 residues long: U5 small nuclear ribonucleoprotein 200 kDa helicase (2139 aa).

Phosphoserine is present on residues serine 17 and serine 26. Residues 39–80 (EVLSLVGKLEGTRMGDKAQRTKPQMQEERRAKRRKRDEDRHD) form a disordered region. A Glycyl lysine isopeptide (Lys-Gly) (interchain with G-Cter in SUMO2) cross-link involves residue lysine 46. Basic and acidic residues predominate over residues 48-80 (EGTRMGDKAQRTKPQMQEERRAKRRKRDEDRHD). Residues 54–84 (DKAQRTKPQMQEERRAKRRKRDEDRHDINKM) are a coiled coil. At serine 225 the chain carries Phosphoserine. The residue at position 389 (threonine 389) is a Phosphothreonine. An interaction with C9orf78 and WBP4 region spans residues 395–2132 (DLDQGGEALA…YKFSVDVKEA (1738 aa)). Residues 490 to 673 (RAALETDENL…FLRVDPAKGL (184 aa)) enclose the Helicase ATP-binding 1 domain. ATP is bound at residue 503–510 (APTGAGKT). The short motif at 615-618 (DEIH) is the DEAH box element. Positions 684–921 (PLEQTYVGIT…NAKDAVNWLG (238 aa)) constitute a Helicase C-terminal 1 domain. Tyrosine 709 carries the post-translational modification Phosphotyrosine. Lysine 944 participates in a covalent cross-link: Glycyl lysine isopeptide (Lys-Gly) (interchain with G-Cter in SUMO). Residue lysine 971 is modified to N6-acetyllysine; alternate. A Glycyl lysine isopeptide (Lys-Gly) (interchain with G-Cter in SUMO); alternate cross-link involves residue lysine 971. The region spanning 982–1289 (TELGRIASHY…SCETQLPVSF (308 aa)) is the SEC63 1 domain. Glycyl lysine isopeptide (Lys-Gly) (interchain with G-Cter in SUMO) cross-links involve residues lysine 1071 and lysine 1199. Residues 1285-2139 (LPVSFRHLIL…KEAETDSDSD (855 aa)) form an interaction with TSSC4 region. The Helicase ATP-binding 2 domain maps to 1340 to 1515 (NTVYNSDDNV…WLGCSATSTF (176 aa)). 1353 to 1360 (APTGSGKT) contacts ATP. Threonine 1431 carries the phosphothreonine modification. Residues 1457 to 1460 (DEVH) carry the DEAH box motif. One can recognise a Helicase C-terminal 2 domain in the interval 1548–1756 (PVYHAITKHS…TIENKQDAVD (209 aa)). Threonine 1768 carries the post-translational modification Phosphothreonine. One can recognise an SEC63 2 domain in the interval 1815 to 2127 (PLNLGMIAAY…GCDQEYKFSV (313 aa)). The residue at position 2005 (serine 2005) is a Phosphoserine. Lysine 2094 is covalently cross-linked (Glycyl lysine isopeptide (Lys-Gly) (interchain with G-Cter in SUMO)). Threonine 2134 carries the phosphothreonine modification. Serine 2136 and serine 2138 each carry phosphoserine.

Belongs to the helicase family. SKI2 subfamily. In terms of assembly, component of a core complex containing at least PRPF8, SNRNP200, EFTUD2 and SNRNP40. Component of the U5 snRNP and U4/U6-U5 tri-snRNP complexes, building blocks of the spliceosome. Component of the U4/U6-U5 tri-snRNP complex composed of the U4, U6 and U5 snRNAs and at least PRPF3, PRPF4, PRPF6, PRPF8, PRPF31, SNRNP200, TXNL4A, SNRNP40, DDX23, CD2BP2, PPIH, SNU13, EFTUD2, SART1 and USP39. Component of precatalytic, catalytic and postcatalytic spliceosomal complexes. Component of the minor spliceosome, which splices U12-type introns. Interacts with C9orf78; the interaction is direct and mutually exclusive with its interaction with WBP4. Interacts with WBP4; the interaction is mutually exclusive with its interaction with C9orf78. Interacts with PRPF8. Interacts with TSSC4; the interaction is direct, excludes recruitment of C9ORF78 and WBP4 to SNRNP200 and negatively regulates its RNA helicase activity.

It localises to the nucleus. The enzyme catalyses ATP + H2O = ADP + phosphate + H(+). Functionally, catalyzes the ATP-dependent unwinding of U4/U6 RNA duplices, an essential step in the assembly of a catalytically active spliceosome. Plays a role in pre-mRNA splicing as core component of precatalytic, catalytic and postcatalytic spliceosomal complexes. As a component of the minor spliceosome, involved in the splicing of U12-type introns in pre-mRNAs. Involved in spliceosome assembly, activation and disassembly. Mediates changes in the dynamic network of RNA-RNA interactions in the spliceosome. The chain is U5 small nuclear ribonucleoprotein 200 kDa helicase (Snrnp200) from Rattus norvegicus (Rat).